A 188-amino-acid chain; its full sequence is Elongation factor P (188 aa).

This sequence belongs to the elongation factor P family.

It is found in the cytoplasm. It participates in protein biosynthesis; polypeptide chain elongation. Involved in peptide bond synthesis. Stimulates efficient translation and peptide-bond synthesis on native or reconstituted 70S ribosomes in vitro. Probably functions indirectly by altering the affinity of the ribosome for aminoacyl-tRNA, thus increasing their reactivity as acceptors for peptidyl transferase. The sequence is that of Elongation factor P from Rhodopseudomonas palustris (strain ATCC BAA-98 / CGA009).